Reading from the N-terminus, the 577-residue chain is Arginine--tRNA ligase (577 aa).

The 'HIGH' region signature appears at 122–132 (PNVAKEMHVGH).

This sequence belongs to the class-I aminoacyl-tRNA synthetase family. In terms of assembly, monomer.

It localises to the cytoplasm. It carries out the reaction tRNA(Arg) + L-arginine + ATP = L-arginyl-tRNA(Arg) + AMP + diphosphate. In Vibrio vulnificus (strain YJ016), this protein is Arginine--tRNA ligase.